The following is a 538-amino-acid chain: Mitochondria-eating protein (538 aa).

The tract at residues 1–273 is interaction with YWHAG/14-3-3 protein gamma; it reads MAENLKRLVS…PRSRSCSRSR (273 aa). A Phosphoserine modification is found at Ser85. Residues 97 to 137 are disordered; the sequence is SKVPSLQDTFDRERHKDPSPRDRDMQQLDSNLNSTRSQCNQ. The segment covering 105 to 122 has biased composition (basic and acidic residues); that stretch reads TFDRERHKDPSPRDRDMQ. Coiled coils occupy residues 118–187 and 219–256; these read DRDM…RHRN and DQQDTEAMSDYKKQLRNLKEEIAVLSAEKSALQGRSSR. Residues 123-137 show a composition bias toward polar residues; it reads QLDSNLNSTRSQCNQ. Phosphoserine occurs at positions 156 and 159. Disordered regions lie at residues 173–226 and 247–294; these read QLKS…TEAM and KSAL…SKLS. Residues 181 to 210 show a composition bias toward basic and acidic residues; that stretch reads EDARHRNTDQRSSENRRSEPWSLEERKREQ. Residues 211 to 224 show a composition bias toward polar residues; the sequence is WNSLKQNADQQDTE. The segment covering 253–278 has biased composition (low complexity); the sequence is RSSRSRSPSPAPRSRSCSRSRSASPS. Phosphoserine is present on residues Ser287 and Ser509.

It belongs to the MIEAP family. In terms of assembly, interacts (via coiled-coil domains) with BNIP3L (via BH3 domain). Interacts (via coiled-coil domains) with BNIP3 (via BH3 domain). As to quaternary structure, interacts with YWHAG/14-3-3 protein gamma; a protein that also plays a role in MALM.

Its subcellular location is the cytoplasm. It localises to the cytosol. It is found in the mitochondrion outer membrane. The protein resides in the mitochondrion matrix. Functionally, key regulator of mitochondrial quality that mediates the repairing or degradation of unhealthy mitochondria in response to mitochondrial damage. Mediator of mitochondrial protein catabolic process (also named MALM) by mediating the degradation of damaged proteins inside mitochondria by promoting the accumulation in the mitochondrial matrix of hydrolases that are characteristic of the lysosomal lumen. Also involved in mitochondrion degradation of damaged mitochondria by promoting the formation of vacuole-like structures (named MIV), which engulf and degrade unhealthy mitochondria by accumulating lysosomes. The physical interaction of SPATA18/MIEAP, BNIP3 and BNIP3L/NIX at the mitochondrial outer membrane regulates the opening of a pore in the mitochondrial double membrane in order to mediate the translocation of lysosomal proteins from the cytoplasm to the mitochondrial matrix. Binds cardiolipin. May form molecular condensates (non-membrane-bounded organelles) within mitochondria that compartmentalize and promote cardiolipin metabolism. This is Mitochondria-eating protein (SPATA18) from Homo sapiens (Human).